Reading from the N-terminus, the 75-residue chain is Large ribosomal subunit protein bL31 (75 aa).

Belongs to the bacterial ribosomal protein bL31 family. Type A subfamily. In terms of assembly, part of the 50S ribosomal subunit.

In terms of biological role, binds the 23S rRNA. This Rhodopseudomonas palustris (strain BisB5) protein is Large ribosomal subunit protein bL31.